The chain runs to 118 residues: NADH-ubiquinone oxidoreductase chain 3 (118 aa).

2 consecutive transmembrane segments (helical) span residues 7-27 (ICIY…LPFL) and 87-107 (IDPF…IGSL).

Belongs to the complex I subunit 3 family.

The protein resides in the mitochondrion membrane. The enzyme catalyses a ubiquinone + NADH + 5 H(+)(in) = a ubiquinol + NAD(+) + 4 H(+)(out). Its function is as follows. Core subunit of the mitochondrial membrane respiratory chain NADH dehydrogenase (Complex I) that is believed to belong to the minimal assembly required for catalysis. Complex I functions in the transfer of electrons from NADH to the respiratory chain. The immediate electron acceptor for the enzyme is believed to be ubiquinone. The sequence is that of NADH-ubiquinone oxidoreductase chain 3 (ND3) from Solanum tuberosum (Potato).